We begin with the raw amino-acid sequence, 60 residues long: Protein translocase subunit SecE (60 aa).

Residues 31 to 51 form a helical membrane-spanning segment; sequence IIVVSTVIFFLVFFYALDIGI.

Belongs to the SecE/SEC61-gamma family. Component of the Sec protein translocase complex. Heterotrimer consisting of SecY, SecE and SecG subunits. The heterotrimers can form oligomers, although 1 heterotrimer is thought to be able to translocate proteins. Interacts with the ribosome. Interacts with SecDF, and other proteins may be involved. Interacts with SecA.

The protein localises to the cell membrane. Essential subunit of the Sec protein translocation channel SecYEG. Clamps together the 2 halves of SecY. May contact the channel plug during translocation. The sequence is that of Protein translocase subunit SecE from Staphylococcus epidermidis (strain ATCC 35984 / DSM 28319 / BCRC 17069 / CCUG 31568 / BM 3577 / RP62A).